A 512-amino-acid polypeptide reads, in one-letter code: Protein SHC1 (512 aa).

A compositionally biased stretch (acidic residues) spans Glu-101–Ala-113. Disordered stretches follow at residues Glu-101 to Gln-122 and Asp-144 to Ala-164. Sel1-like repeat units lie at residues Pro-318 to His-353, Ile-354 to His-389, Pro-390 to Ser-429, and Cys-433 to His-470.

Belongs to the SKT5 family.

Its subcellular location is the cytoplasm. The protein localises to the cytoplasmic granule membrane. Functionally, required for the activation of chitin synthase III (CHS3) activity during the sporulation process. This Saccharomyces cerevisiae (strain ATCC 204508 / S288c) (Baker's yeast) protein is Protein SHC1 (SHC1).